Here is a 251-residue protein sequence, read N- to C-terminus: Plant UBX domain-containing protein 1 (251 aa).

Met1 carries the post-translational modification N-acetylmethionine. One can recognise a UBX domain in the interval 104-180 (SKLTKAVIRV…GFVPGAIVYF (77 aa)). The disordered stretch occupies residues 212-251 (AVEPVESSSEPATVDSSAVPVEHERKSTEKKTTKPKWFKM). Polar residues predominate over residues 217–227 (ESSSEPATVDS). Over residues 232-243 (VEHERKSTEKKT) the composition is skewed to basic and acidic residues.

In terms of assembly, interacts with CDC48A (non-hexameric) via its UBX-containing C-terminal domain.

Its subcellular location is the cytoplasm. In terms of biological role, regulates CDC48A by inhibiting its ATPase activity and by promoting the disassembly of the active hexamer. The protein is Plant UBX domain-containing protein 1 of Arabidopsis thaliana (Mouse-ear cress).